The sequence spans 166 residues: MIKAVMMMNTQGKPRLAKFYDYLPVEKQQELIRGVFSVLCSRPENVSNFLEIESLFGPDSRLVYKHYATLYFVLVFDGSENELAMLDLIQVLVETLDKCFSNVCELDIVFNYSKMHAVLDEIVFGGQVLETSSAEVMKAVEEISKLEAASNSISLVPKSVSGWRGR.

Belongs to the adaptor complexes small subunit family. As to quaternary structure, adaptor protein complex 3 (AP-3) is a heterotetramer composed of two large adaptins (delta-type subunit and beta-type subunit), a medium adaptin (mu-type subunit) and a small adaptin (sigma-type subunit).

It is found in the cytoplasm. The protein localises to the golgi apparatus. Its subcellular location is the cytoplasmic vesicle membrane. In terms of biological role, part of the AP-3 complex, an adaptor-related complex which seems to be clathrin-associated. The complex is associated with the Golgi region as well as more peripheral structures. It facilitates the budding of vesicles from the Golgi membrane and may be directly involved in trafficking to the vacuole. It also function in maintaining the identity of lytic vacuoles and in regulating the transition between storage and lytic vacuoles. The protein is AP-3 complex subunit sigma of Arabidopsis thaliana (Mouse-ear cress).